Consider the following 87-residue polypeptide: Cell division topological specificity factor (87 aa).

It belongs to the MinE family.

Prevents the cell division inhibition by proteins MinC and MinD at internal division sites while permitting inhibition at polar sites. This ensures cell division at the proper site by restricting the formation of a division septum at the midpoint of the long axis of the cell. The protein is Cell division topological specificity factor of Acidiphilium cryptum (strain JF-5).